The chain runs to 684 residues: Kinesin-like protein KIN-13B (684 aa).

2 disordered regions span residues 1–31 and 71–103; these read MSGRQRSVAAAVHHQRQLSDNPLDMSSSNGR and GNEFFGEPTTPQYGARPTNQRKNNDESEFSPGL. Polar residues-rich tracts occupy residues 18-31 and 79-91; these read LSDNPLDMSSSNGR and TTPQYGARPTNQR. A Kinesin motor domain is found at 169–492; sequence KIKVVVRKRP…LRYADRVKSL (324 aa). 258–265 lines the ATP pocket; it reads GQTGSGKT. A disordered region spans residues 574-594; that stretch reads KPTIQMKSRDMPRPDMKKSNS. A compositionally biased stretch (basic and acidic residues) spans 580 to 594; the sequence is KSRDMPRPDMKKSNS. The stretch at 596–626 forms a coiled coil; it reads DNLNALLQEEEDLVNAHRKQVEDTMNIVKEE.

This sequence belongs to the TRAFAC class myosin-kinesin ATPase superfamily. Kinesin family. KIN-13 subfamily.

Its function is as follows. Acts redundantly with KIN13A to modulate cell wall synthesis and cell expansion via the THE1 pathway. This Arabidopsis thaliana (Mouse-ear cress) protein is Kinesin-like protein KIN-13B.